The primary structure comprises 168 residues: Large ribosomal subunit protein bL9 (168 aa).

The disordered stretch occupies residues 148 to 168 (ENGEGSVQPAAEAAEVASTEA). Residues 157–168 (AAEAAEVASTEA) show a composition bias toward low complexity.

Belongs to the bacterial ribosomal protein bL9 family.

Binds to the 23S rRNA. This chain is Large ribosomal subunit protein bL9, found in Herpetosiphon aurantiacus (strain ATCC 23779 / DSM 785 / 114-95).